The chain runs to 640 residues: Antigenic protein NP1 (640 aa).

Residues 1–288 (VQVSIGKCNH…SYVNIAHAFG (288 aa)) form the Peptidase M60 domain. Positions 463 to 615 (LDPHQVEYEV…TDQSSVNVSK (153 aa)) constitute a PA14 domain.

This Entamoeba histolytica protein is Antigenic protein NP1.